The primary structure comprises 281 residues: 4-diphosphocytidyl-2-C-methyl-D-erythritol kinase (281 aa).

Residue K15 is part of the active site. Residue 98–108 (PTGAGLGGGSS) participates in ATP binding. D140 is a catalytic residue.

This sequence belongs to the GHMP kinase family. IspE subfamily.

It catalyses the reaction 4-CDP-2-C-methyl-D-erythritol + ATP = 4-CDP-2-C-methyl-D-erythritol 2-phosphate + ADP + H(+). It functions in the pathway isoprenoid biosynthesis; isopentenyl diphosphate biosynthesis via DXP pathway; isopentenyl diphosphate from 1-deoxy-D-xylulose 5-phosphate: step 3/6. Functionally, catalyzes the phosphorylation of the position 2 hydroxy group of 4-diphosphocytidyl-2C-methyl-D-erythritol. In Neisseria gonorrhoeae (strain ATCC 700825 / FA 1090), this protein is 4-diphosphocytidyl-2-C-methyl-D-erythritol kinase.